We begin with the raw amino-acid sequence, 305 residues long: J domain-containing protein 1 (305 aa).

A J domain is found at 91–163; that stretch reads TPYEVLGLVK…SRRRMYDMYA (73 aa). Residues 212–232 form a helical membrane-spanning segment; it reads WGMVVWALCMLAGFQVMAFLI.

This sequence belongs to the DnaJ family.

It localises to the mitochondrion membrane. In terms of biological role, probable chaperone. This is J domain-containing protein 1 (JID1) from Eremothecium gossypii (strain ATCC 10895 / CBS 109.51 / FGSC 9923 / NRRL Y-1056) (Yeast).